We begin with the raw amino-acid sequence, 459 residues long: tRNA modification GTPase MnmE (459 aa).

(6S)-5-formyl-5,6,7,8-tetrahydrofolate-binding residues include Arg30, Glu93, and Lys132. A TrmE-type G domain is found at 226-381 (GVTMAIVGKP…LEEKILESVK (156 aa)). Asn236 provides a ligand contact to K(+). GTP contacts are provided by residues 236-241 (NVGKST), 255-261 (TDIPGTT), and 280-283 (DTAG). Mg(2+) is bound at residue Ser240. Thr255, Ile257, and Thr260 together coordinate K(+). Thr261 is a Mg(2+) binding site. Residue Lys459 participates in (6S)-5-formyl-5,6,7,8-tetrahydrofolate binding.

Belongs to the TRAFAC class TrmE-Era-EngA-EngB-Septin-like GTPase superfamily. TrmE GTPase family. As to quaternary structure, homodimer. Heterotetramer of two MnmE and two MnmG subunits. Requires K(+) as cofactor.

It is found in the cytoplasm. Exhibits a very high intrinsic GTPase hydrolysis rate. Involved in the addition of a carboxymethylaminomethyl (cmnm) group at the wobble position (U34) of certain tRNAs, forming tRNA-cmnm(5)s(2)U34. In Fervidobacterium nodosum (strain ATCC 35602 / DSM 5306 / Rt17-B1), this protein is tRNA modification GTPase MnmE.